Reading from the N-terminus, the 366-residue chain is Putative F-box protein At3g13624 (366 aa).

In terms of domain architecture, F-box spans 1–51 (MTTISDLPEDVVEEILPRVPLTSLSAVRSICKTWNTLSKNRVLCKAAVKKQ).

The sequence is that of Putative F-box protein At3g13624 from Arabidopsis thaliana (Mouse-ear cress).